The following is a 232-amino-acid chain: Large ribosomal subunit protein uL1 (232 aa).

The protein belongs to the universal ribosomal protein uL1 family. Part of the 50S ribosomal subunit.

Functionally, binds directly to 23S rRNA. The L1 stalk is quite mobile in the ribosome, and is involved in E site tRNA release. Protein L1 is also a translational repressor protein, it controls the translation of the L11 operon by binding to its mRNA. The chain is Large ribosomal subunit protein uL1 from Mesorhizobium japonicum (strain LMG 29417 / CECT 9101 / MAFF 303099) (Mesorhizobium loti (strain MAFF 303099)).